A 479-amino-acid chain; its full sequence is Altronate oxidoreductase (479 aa).

Residue 18-29 (IIQFGEGNFLRA) participates in NAD(+) binding.

This sequence belongs to the mannitol dehydrogenase family. UxaB subfamily.

It catalyses the reaction D-altronate + NAD(+) = keto-D-tagaturonate + NADH + H(+). It participates in carbohydrate metabolism; pentose and glucuronate interconversion. This chain is Altronate oxidoreductase, found in Phocaeicola vulgatus (strain ATCC 8482 / DSM 1447 / JCM 5826 / CCUG 4940 / NBRC 14291 / NCTC 11154) (Bacteroides vulgatus).